The chain runs to 202 residues: Dephospho-CoA kinase (202 aa).

The DPCK domain maps to 3–202 (IFGLTGGIGS…ISHRSKYLSC (200 aa)). Residue 11–16 (GSGKSL) participates in ATP binding.

The protein belongs to the CoaE family.

The protein resides in the cytoplasm. It catalyses the reaction 3'-dephospho-CoA + ATP = ADP + CoA + H(+). It participates in cofactor biosynthesis; coenzyme A biosynthesis; CoA from (R)-pantothenate: step 5/5. Catalyzes the phosphorylation of the 3'-hydroxyl group of dephosphocoenzyme A to form coenzyme A. The chain is Dephospho-CoA kinase from Ehrlichia chaffeensis (strain ATCC CRL-10679 / Arkansas).